The sequence spans 318 residues: Transaldolase (318 aa).

Residue lysine 132 is the Schiff-base intermediate with substrate of the active site.

The protein belongs to the transaldolase family. Type 1 subfamily. In terms of assembly, homodimer.

Its subcellular location is the cytoplasm. It catalyses the reaction D-sedoheptulose 7-phosphate + D-glyceraldehyde 3-phosphate = D-erythrose 4-phosphate + beta-D-fructose 6-phosphate. It functions in the pathway carbohydrate degradation; pentose phosphate pathway; D-glyceraldehyde 3-phosphate and beta-D-fructose 6-phosphate from D-ribose 5-phosphate and D-xylulose 5-phosphate (non-oxidative stage): step 2/3. Functionally, transaldolase is important for the balance of metabolites in the pentose-phosphate pathway. The polypeptide is Transaldolase (Hamiltonella defensa subsp. Acyrthosiphon pisum (strain 5AT)).